A 209-amino-acid polypeptide reads, in one-letter code: ATP synthase subunit O, mitochondrial (209 aa).

This sequence belongs to the ATPase delta chain family. F-type ATPases have 2 components, CF(1) - the catalytic core - and CF(0) - the membrane proton channel. CF(1) has five subunits: alpha(3), beta(3), gamma(1), delta(1), epsilon(1). CF(0) has three main subunits: a, b and c.

It is found in the mitochondrion. Its subcellular location is the mitochondrion inner membrane. Mitochondrial membrane ATP synthase (F(1)F(0) ATP synthase or Complex V) produces ATP from ADP in the presence of a proton gradient across the membrane which is generated by electron transport complexes of the respiratory chain. F-type ATPases consist of two structural domains, F(1) - containing the extramembraneous catalytic core and F(0) - containing the membrane proton channel, linked together by a central stalk and a peripheral stalk. During catalysis, ATP synthesis in the catalytic domain of F(1) is coupled via a rotary mechanism of the central stalk subunits to proton translocation. Part of the complex F(0) domain and the peripheric stalk, which acts as a stator to hold the catalytic alpha(3)beta(3) subcomplex and subunit a/ATP6 static relative to the rotary elements. This Drosophila melanogaster (Fruit fly) protein is ATP synthase subunit O, mitochondrial.